A 288-amino-acid chain; its full sequence is Glucose-1-phosphate thymidylyltransferase (288 aa).

Positions 108 and 223 each coordinate Mg(2+).

It belongs to the glucose-1-phosphate thymidylyltransferase family. In terms of assembly, homotetramer. Requires Mg(2+) as cofactor.

The enzyme catalyses dTTP + alpha-D-glucose 1-phosphate + H(+) = dTDP-alpha-D-glucose + diphosphate. Functionally, catalyzes the formation of dTDP-glucose, from dTTP and glucose 1-phosphate, as well as its pyrophosphorolysis. This Neisseria gonorrhoeae protein is Glucose-1-phosphate thymidylyltransferase (rmlA).